The primary structure comprises 234 residues: tRNA1(Val) (adenine(37)-N6)-methyltransferase (234 aa).

It belongs to the methyltransferase superfamily. tRNA (adenine-N(6)-)-methyltransferase family.

The protein localises to the cytoplasm. The catalysed reaction is adenosine(37) in tRNA1(Val) + S-adenosyl-L-methionine = N(6)-methyladenosine(37) in tRNA1(Val) + S-adenosyl-L-homocysteine + H(+). Its function is as follows. Specifically methylates the adenine in position 37 of tRNA(1)(Val) (anticodon cmo5UAC). This chain is tRNA1(Val) (adenine(37)-N6)-methyltransferase, found in Pedobacter heparinus (strain ATCC 13125 / DSM 2366 / CIP 104194 / JCM 7457 / NBRC 12017 / NCIMB 9290 / NRRL B-14731 / HIM 762-3).